The following is a 154-amino-acid chain: 6,7-dimethyl-8-ribityllumazine synthase (154 aa).

Residues F23, 57-59, and 81-83 contribute to the 5-amino-6-(D-ribitylamino)uracil site; these read AYE and AVI. Position 86-87 (86-87) interacts with (2S)-2-hydroxy-3-oxobutyl phosphate; that stretch reads AT. The Proton donor role is filled by H89. F114 serves as a coordination point for 5-amino-6-(D-ribitylamino)uracil. R128 provides a ligand contact to (2S)-2-hydroxy-3-oxobutyl phosphate.

This sequence belongs to the DMRL synthase family.

The enzyme catalyses (2S)-2-hydroxy-3-oxobutyl phosphate + 5-amino-6-(D-ribitylamino)uracil = 6,7-dimethyl-8-(1-D-ribityl)lumazine + phosphate + 2 H2O + H(+). It participates in cofactor biosynthesis; riboflavin biosynthesis; riboflavin from 2-hydroxy-3-oxobutyl phosphate and 5-amino-6-(D-ribitylamino)uracil: step 1/2. In terms of biological role, catalyzes the formation of 6,7-dimethyl-8-ribityllumazine by condensation of 5-amino-6-(D-ribitylamino)uracil with 3,4-dihydroxy-2-butanone 4-phosphate. This is the penultimate step in the biosynthesis of riboflavin. This is 6,7-dimethyl-8-ribityllumazine synthase from Desulforamulus reducens (strain ATCC BAA-1160 / DSM 100696 / MI-1) (Desulfotomaculum reducens).